Reading from the N-terminus, the 867-residue chain is Alanine--tRNA ligase (867 aa).

Positions 559, 563, 661, and 665 each coordinate Zn(2+).

Belongs to the class-II aminoacyl-tRNA synthetase family. Zn(2+) serves as cofactor.

It is found in the cytoplasm. It catalyses the reaction tRNA(Ala) + L-alanine + ATP = L-alanyl-tRNA(Ala) + AMP + diphosphate. Catalyzes the attachment of alanine to tRNA(Ala) in a two-step reaction: alanine is first activated by ATP to form Ala-AMP and then transferred to the acceptor end of tRNA(Ala). Also edits incorrectly charged Ser-tRNA(Ala) and Gly-tRNA(Ala) via its editing domain. The polypeptide is Alanine--tRNA ligase (Aquifex aeolicus (strain VF5)).